A 1328-amino-acid polypeptide reads, in one-letter code: Protein turtle homolog B (1328 aa).

The signal sequence occupies residues 1–20 (MIWYVATLIASVISTRGLVA). Topologically, residues 21–722 (QVAHGLREEP…DLTDDGLARP (702 aa)) are extracellular. 5 consecutive Ig-like domains span residues 30–115 (PEFV…ECKV), 139–226 (PTFT…LLVQ), 228–320 (PPFI…AYLT), 324–415 (PARV…ARLV), and 420–504 (PYFT…THLT). 2 cysteine pairs are disulfide-bonded: Cys45–Cys113 and Cys161–Cys208. 2 N-linked (GlcNAc...) asparagine glycosylation sites follow: Asn241 and Asn258. 3 disulfides stabilise this stretch: Cys250-Cys303, Cys346-Cys397, and Cys442-Cys488. Fibronectin type-III domains lie at 512-604 (APGS…TLAF) and 614-708 (LVTP…STDI). Asn624 is a glycosylation site (N-linked (GlcNAc...) asparagine). The helical transmembrane segment at 723–743 (VLAGIVATICFLAAAILFSTL) threads the bilayer. The Cytoplasmic segment spans residues 744–1328 (AACFVNKQRK…EPPTTLPTSG (585 aa)). Disordered stretches follow at residues 758–817 (RKKD…EKEL), 914–1040 (PMSS…PEPW), and 1107–1328 (SPGR…PTSG). Residues Ser775, Ser783, and Ser794 each carry the phosphoserine modification. Residues 990–1001 (SPLSSVMSSPPL) are compositionally biased toward low complexity. Polar residues-rich tracts occupy residues 1018-1033 (ENAS…TPTG), 1129-1141 (LVSQ…TSQG), and 1199-1214 (SRLS…SRTG). Omega-N-methylarginine is present on Arg1136. 2 positions are modified to phosphoserine: Ser1207 and Ser1215. Positions 1246–1273 (SFSRKSTPSSTGSPSQSSRSGSPSYRPT) are enriched in low complexity. 2 stretches are compositionally biased toward pro residues: residues 1284 to 1295 (PSPPPGPAPPAP) and 1318 to 1328 (PEPPTTLPTSG).

The protein belongs to the immunoglobulin superfamily. Turtle family. Found in a complex with MAGI2 and NLGN2, where it interacts with MAGI2 (via PDZ 5 and PDZ 6 domains). In terms of processing, N-glycosylated and sialylated. Not significantly O-glycosylated. In terms of tissue distribution, detected primarily in brain, including cortex, hippocampus, cerebellum and striatum. Largely restricted to inhibitory GABAergic interneurons (at protein level).

Its subcellular location is the postsynaptic cell membrane. It is found in the postsynaptic density. Its function is as follows. Transmembrane protein which is abundantly expressed in interneurons, where it may regulate inhibitory synapse development. May mediate homophilic cell adhesion. The chain is Protein turtle homolog B from Rattus norvegicus (Rat).